The sequence spans 311 residues: MTSTPHHPDLRSQLETLTTEAFRPELAEIDQLPTLDIARLMNGEDATVPAAVAERLPEIAAAIDAVAVRMARGGRLIYAGAGTAGRLGVLDASECPPTFNTGPGQVVGLIAGGPDAMVTSIEGAEDSPELARADLDALALTADDTVVGVSASGRTPYAVGAVEYARSLGALTVGLACNRDSALAAAAEHGIEVVTGPELLTGSTRLKAGTAQKLVLNMLSTITMIRLGKTYGNLMVDVRASNEKLRARSRRIVALATGAADDDIERALTATDGEVKDAILVLLADVDGPTAARLLAESGGHLRAAMAAALG.

In terms of domain architecture, SIS spans 66–229; that stretch reads VAVRMARGGR…STITMIRLGK (164 aa). The active-site Proton donor is E94. E125 is an active-site residue.

It belongs to the GCKR-like family. MurNAc-6-P etherase subfamily. Homodimer.

It catalyses the reaction N-acetyl-D-muramate 6-phosphate + H2O = N-acetyl-D-glucosamine 6-phosphate + (R)-lactate. The protein operates within amino-sugar metabolism; N-acetylmuramate degradation. Specifically catalyzes the cleavage of the D-lactyl ether substituent of MurNAc 6-phosphate, producing GlcNAc 6-phosphate and D-lactate. This Streptomyces coelicolor (strain ATCC BAA-471 / A3(2) / M145) protein is N-acetylmuramic acid 6-phosphate etherase.